The following is a 1271-amino-acid chain: MVRKKNPPLRNIASEGEAQITESAASKREDTISSKEISTDPMQENSEQSGLVEHNSDDHSFHDQEPSSSINKDSASLSLSERAVVNYSHLKGRNVYFSPMEVTDRNMLALVTTDTRSACDPLKSPIKSEADDTQELASSASVDSLEAKEENDMSPRATDFTVQCGKVDCQSSSPASVASDNLHVPSDGIAGLNKSQAVLLVNDNSDSAPLSPELQDFKCNICGYGYYGNDPTDLIKHFRKYHLGLHNRTRQDVELDTKILALHNMVQFSQSKDFQKMNRSVLSGVLQDFNSPRPVLLNGTYDVQVTFGETFIGIGRKTPDCQGNTKYFRCKFCNFTYLAKSATELEQHFLKTHPNKMKMSSDSGKPSEKSTNKSSPIPRSCEPGDLGKWQDKITVKAADDIPVGYSVPIKPVDSCRQNGTDDTNYYWCKFCSFSCESSSNSKLLEHHSKQHGGGKSESPNSDLNDEIFRGSVINQNEITKSSDEQLPTKIDKGLAKKKDVSSVPTEDIIVTNYNCQFCDFRYSKSHGPEVILVGPLLRHYQQHHNIHKCTIKHCPFCPRGLCTPEKHLGEITYPFACKKSNCSHCALLLLHLSSGGTESTRVKHQCDQCSFSSPDVDVLLLHYENAHEAQACEIKQELNHQHGADGQPSIKEIKEHSCTKCDFIVQVEEDLPRHYRRVHNCYKCRQCNFTAADTQSLLDHFNSAHCQEFEITTSNGGEHHGTSSIKEEPKTDLKVYNLVTPDSKMGEAIFDSTVKKEKLEDKETLREKAWSDGSVDDLRGVAWRAPDILRTSPSYSQMGLGLLTTVSVNQDQQKSSRDSPNVEAAHLARPVYGLSIEPKGFQGVTAGASGEKSGQHTPQYPTAGDSKSKDESQSLLRRRRGSGVFCANCLTTKTSLWRKNANGGYVCNACGLYQKLHSTPRPLNIIKQNNGEQIIRRRTRKRLNPEALQPEQLTKHQRASSEEQANGSPLDIRSEDHSMEGHQRENQQLSMNKYGSQASLTKSHSAQQTMIVSQTMDIHKRMQPLHIQIKSPQESSGEPGNSSSVSDGKGSSERGSPIEKYMRPIKHPNYSPPGSPIEKYQYPLFGLPFVHNDFQSEADWLRFWSKYKLSVPGNPHYLSHVPGLPNPCPNYVPYPTFNLPAQYSSVGSDNDIPLDLAMKHSRPGSGTNGDSKEKSKSPVSVKDDGPLNVTKIEKSDKSTQDELSTKCVHCGIVFLDEVMYALHMSCHGESGPFQCSICQHLCTDKYDFTTHIQRGLHRNIAQAEKNGKNKD.

2 disordered regions span residues 1–76 (MVRK…DSAS) and 124–155 (SPIK…DMSP). A compositionally biased stretch (polar residues) spans 34 to 49 (SKEISTDPMQENSEQS). Over residues 54-65 (HNSDDHSFHDQE) the composition is skewed to basic and acidic residues. Positions 66-76 (PSSSINKDSAS) are enriched in polar residues. The segment at 217-242 (FKCNICGYGYYGNDPTDLIKHFRKYH) adopts a C2H2-type 1; atypical zinc-finger fold. The C2H2-type 2; atypical zinc-finger motif lies at 328-353 (FRCKFCNFTYLAKSATELEQHFLKTH). The disordered stretch occupies residues 353-387 (HPNKMKMSSDSGKPSEKSTNKSSPIPRSCEPGDLG). A C2H2-type 3; atypical zinc finger spans residues 426-451 (YWCKFCSFSCESSSNSKLLEHHSKQH). Residues 513-543 (YNCQFCDFRYSKSHGPEVILVGPLLRHYQQH) form a C2H2-type 4; atypical zinc finger. 3 C2H2-type zinc fingers span residues 604–627 (HQCD…ENAH), 656–679 (HSCT…RRVH), and 682–705 (YKCR…NSAH). The interval 843 to 877 (GVTAGASGEKSGQHTPQYPTAGDSKSKDESQSLLR) is disordered. Residues 886–910 (CANCLTTKTSLWRKNANGGYVCNAC) form a GATA-type zinc finger. Disordered regions lie at residues 938-987 (RTRK…RENQ), 1031-1064 (SPQE…YMRP), and 1154-1196 (LDLA…EKSD). Residues 972–985 (IRSEDHSMEGHQRE) show a composition bias toward basic and acidic residues. Residues 1031-1049 (SPQESSGEPGNSSSVSDGK) show a composition bias toward low complexity. Composition is skewed to basic and acidic residues over residues 1050 to 1062 (GSSE…EKYM) and 1170 to 1196 (DSKE…EKSD). The segment at 1153-1271 (PLDLAMKHSR…QAEKNGKNKD (119 aa)) is transcriptional repressor domain. Residues K1182 and K1191 each participate in a glycyl lysine isopeptide (Lys-Gly) (interchain with G-Cter in SUMO) cross-link. 2 C2H2-type zinc fingers span residues 1205–1227 (TKCV…MSCH) and 1233–1257 (FQCS…RGLH).

Binds specifically to GATA sequences. Post-translationally, sumoylated. Sumoylation in the repressor domain inhibits the transcription repression activity. Sumoylation on Lys-1191 is the major site. Appears to be sumoylated on multiple sites.

It localises to the nucleus. Functionally, transcriptional repressor. Represses expression of GATA-regulated genes at selected sites and stages in vertebrate development. This is Zinc finger transcription factor Trps1 (trps1) from Xenopus laevis (African clawed frog).